The primary structure comprises 336 residues: tRNA N6-adenosine threonylcarbamoyltransferase (336 aa).

Fe cation-binding residues include H112 and H116. Substrate-binding positions include 136 to 140 (LVSGG), D169, G182, and N276. D304 contributes to the Fe cation binding site.

Belongs to the KAE1 / TsaD family. It depends on Fe(2+) as a cofactor.

It localises to the cytoplasm. It carries out the reaction L-threonylcarbamoyladenylate + adenosine(37) in tRNA = N(6)-L-threonylcarbamoyladenosine(37) in tRNA + AMP + H(+). In terms of biological role, required for the formation of a threonylcarbamoyl group on adenosine at position 37 (t(6)A37) in tRNAs that read codons beginning with adenine. Is involved in the transfer of the threonylcarbamoyl moiety of threonylcarbamoyl-AMP (TC-AMP) to the N6 group of A37, together with TsaE and TsaB. TsaD likely plays a direct catalytic role in this reaction. The sequence is that of tRNA N6-adenosine threonylcarbamoyltransferase from Francisella tularensis subsp. novicida (strain U112).